The following is a 356-amino-acid chain: Putative methylthioribose-1-phosphate isomerase (356 aa).

Substrate contacts are provided by residues 57 to 59 (RGA), Arg100, and Gln206. Asp247 acts as the Proton donor in catalysis. 257–258 (NK) lines the substrate pocket.

The protein belongs to the eIF-2B alpha/beta/delta subunits family. MtnA subfamily.

The catalysed reaction is 5-(methylsulfanyl)-alpha-D-ribose 1-phosphate = 5-(methylsulfanyl)-D-ribulose 1-phosphate. Its function is as follows. Catalyzes the interconversion of methylthioribose-1-phosphate (MTR-1-P) into methylthioribulose-1-phosphate (MTRu-1-P). This is Putative methylthioribose-1-phosphate isomerase (aIF-2BI) from Pyrococcus abyssi (strain GE5 / Orsay).